The sequence spans 144 residues: MCHAREASPGTGEPEAAPRDNFPRAAGSKRGVGAAFETRAQRFLERAGLALVARNVTVRGGEIDLVMRERDGTLVFVEVRARANSRYGGAAASIGARKRMRLLLAAHAFWARTGGANACRFDVVAFEGSRLVWLRDAFRADDAG.

The disordered stretch occupies residues 1 to 28; sequence MCHAREASPGTGEPEAAPRDNFPRAAGS.

It belongs to the UPF0102 family.

In Burkholderia pseudomallei (strain 1106a), this protein is UPF0102 protein BURPS1106A_3900.